The primary structure comprises 287 residues: NAD kinase (287 aa).

Residue Asp70 is the Proton acceptor of the active site. Residues Asp70–Gly71, Asn144–Asp145, Arg155, Lys172, Asp174, Thr185–Ser190, and Gln244 contribute to the NAD(+) site.

It belongs to the NAD kinase family. It depends on a divalent metal cation as a cofactor.

It is found in the cytoplasm. It catalyses the reaction NAD(+) + ATP = ADP + NADP(+) + H(+). In terms of biological role, involved in the regulation of the intracellular balance of NAD and NADP, and is a key enzyme in the biosynthesis of NADP. Catalyzes specifically the phosphorylation on 2'-hydroxyl of the adenosine moiety of NAD to yield NADP. This is NAD kinase from Solibacter usitatus (strain Ellin6076).